A 236-amino-acid chain; its full sequence is Pyridoxine 5'-phosphate synthase (236 aa).

3-amino-2-oxopropyl phosphate is bound at residue N6. 8 to 9 serves as a coordination point for 1-deoxy-D-xylulose 5-phosphate; that stretch reads DH. R17 is a binding site for 3-amino-2-oxopropyl phosphate. H42 acts as the Proton acceptor in catalysis. 1-deoxy-D-xylulose 5-phosphate is bound by residues R44 and H49. E69 acts as the Proton acceptor in catalysis. Residue T99 participates in 1-deoxy-D-xylulose 5-phosphate binding. H190 acts as the Proton donor in catalysis. Residues G191 and 212-213 contribute to the 3-amino-2-oxopropyl phosphate site; that span reads GH.

It belongs to the PNP synthase family. As to quaternary structure, homooctamer; tetramer of dimers.

It localises to the cytoplasm. The catalysed reaction is 3-amino-2-oxopropyl phosphate + 1-deoxy-D-xylulose 5-phosphate = pyridoxine 5'-phosphate + phosphate + 2 H2O + H(+). It participates in cofactor biosynthesis; pyridoxine 5'-phosphate biosynthesis; pyridoxine 5'-phosphate from D-erythrose 4-phosphate: step 5/5. Functionally, catalyzes the complicated ring closure reaction between the two acyclic compounds 1-deoxy-D-xylulose-5-phosphate (DXP) and 3-amino-2-oxopropyl phosphate (1-amino-acetone-3-phosphate or AAP) to form pyridoxine 5'-phosphate (PNP) and inorganic phosphate. This chain is Pyridoxine 5'-phosphate synthase, found in Pelodictyon phaeoclathratiforme (strain DSM 5477 / BU-1).